A 189-amino-acid polypeptide reads, in one-letter code: Protein jagunal homolog (189 aa).

At 1 to 34 the chain is on the cytoplasmic side; sequence MSSRGVRAAGTDGTDFQNRQRVAQHYQESAQYKS. Residues 35 to 55 form a helical membrane-spanning segment; sequence ILKWFFVPHFLILVFMWLKVG. The Lumenal portion of the chain corresponds to 56–78; the sequence is SELLRTNFGWKNAFFDRLDMPSA. The helical transmembrane segment at 79-99 threads the bilayer; the sequence is YPWEYVWCFSFIPIVLAIYSF. Residues 100-105 lie on the Cytoplasmic side of the membrane; sequence QRNKLK. A helical membrane pass occupies residues 106–126; that stretch reads ILHYAYYAEFVVGIFPCMIGL. Over 127–150 the chain is Lumenal; sequence GGQLPELMEYAQDMEGSNTPTFKG. The helical transmembrane segment at 151–171 threads the bilayer; sequence IFPMVIIWYIFFAVALQIHGF. Over 172 to 189 the chain is Cytoplasmic; it reads SMYFMHHLAAAWAPVKRD.

It belongs to the jagunal family.

The protein localises to the endoplasmic reticulum membrane. This is Protein jagunal homolog from Caenorhabditis elegans.